The following is a 363-amino-acid chain: 4-hydroxy-2-oxovalerate aldolase 1 (363 aa).

Positions 13-265 (VRMTDTSLRD…KTGIDFFDIA (253 aa)) constitute a Pyruvate carboxyltransferase domain. 21-22 (RD) provides a ligand contact to substrate. Position 22 (aspartate 22) interacts with Mn(2+). Histidine 25 functions as the Proton acceptor in the catalytic mechanism. The substrate site is built by serine 175 and histidine 204. Mn(2+) contacts are provided by histidine 204 and histidine 206. Tyrosine 295 is a binding site for substrate.

It belongs to the 4-hydroxy-2-oxovalerate aldolase family.

The enzyme catalyses (S)-4-hydroxy-2-oxopentanoate = acetaldehyde + pyruvate. The sequence is that of 4-hydroxy-2-oxovalerate aldolase 1 from Mycobacterium sp. (strain JLS).